Consider the following 401-residue polypeptide: Phosrestin-1 (401 aa).

At Ser366 the chain carries Phosphoserine; by CaMK.

It belongs to the arrestin family. In terms of processing, phosphorylated upon light exposure. Expressed in photoreceptor cells.

Its subcellular location is the cell projection. It localises to the rhabdomere. Regulates photoreceptor cell deactivation. Arr1 and Arr2 proteins are mediators of rhodopsin inactivation and are essential for the termination of the phototransduction cascade. Involved in regulating normal cycles of per nuclear accumulation in brain circadian neurons and thus is important for normal circadian behavior. In the dark, functions with Arr1 to promote the formation of cytosolic Bdbt foci, which are required for dco localization to photoreceptor nuclei where it phosphorylates and activates degradation of per. In Drosophila melanogaster (Fruit fly), this protein is Phosrestin-1 (Arr2).